Here is a 752-residue protein sequence, read N- to C-terminus: Sialidase 85-1.1 (752 aa).

Positions 1–23 (MSRRVFASAVLLLIVVTMCCGGA) are cleaved as a signal peptide. BNR repeat units follow at residues 274–285 (IYSKDNGSTWSL) and 319–330 (YVSRDMGTTWTE). The interval 693-725 (APEPQVKIAPKPAAPAAPAGNEETARETGDGGA) is disordered. Low complexity predominate over residues 701–711 (APKPAAPAAPA).

Belongs to the glycosyl hydrolase 33 family.

It carries out the reaction Hydrolysis of alpha-(2-&gt;3)-, alpha-(2-&gt;6)-, alpha-(2-&gt;8)- glycosidic linkages of terminal sialic acid residues in oligosaccharides, glycoproteins, glycolipids, colominic acid and synthetic substrates.. Functionally, developmentally regulated neuraminidase implicated in parasite invasion of cells. May contribute to the pathology during T.cruzi infection by cleaving sialic acid from cells of the immune system. This Trypanosoma cruzi protein is Sialidase 85-1.1 (SA85-1.1).